A 310-amino-acid chain; its full sequence is Translocator protein BipD (310 aa).

2 coiled-coil regions span residues 127–171 (DPIL…LQDY) and 250–299 (DTAR…AIST).

It belongs to the invasin protein D family.

The protein localises to the secreted. In terms of biological role, required for invasion of epithelial cells, as well as for survival within host cells, escape from endocytic vesicles and subsequent actin-tail formation. Probably regulates the secretion of effectors BipB and BipC and their final integration into the target cell membrane. The sequence is that of Translocator protein BipD (bipD) from Burkholderia pseudomallei (strain 1106a).